The sequence spans 398 residues: UPF0261 protein RA0729 (398 aa).

The protein belongs to the UPF0261 family.

This chain is UPF0261 protein RA0729, found in Rhizobium meliloti (strain 1021) (Ensifer meliloti).